Here is a 259-residue protein sequence, read N- to C-terminus: Glucose-1-phosphate thymidylyltransferase (259 aa).

The protein belongs to the inositol monophosphatase superfamily.

The enzyme catalyses dTTP + alpha-D-glucose 1-phosphate + H(+) = dTDP-alpha-D-glucose + diphosphate. The protein operates within antibiotic biosynthesis; streptomycin biosynthesis. This is Glucose-1-phosphate thymidylyltransferase (strO) from Streptomyces griseus.